The sequence spans 422 residues: tRNA hydroxylation protein P (422 aa).

A signal peptide spans 1 to 58 (MNQVELLSPAGNLKKLKIALNYGADAVYGGVSHFSLRNRAGKEFTLETFKEGIDYAHA).

Belongs to the peptidase U32 family.

Functionally, involved in prephenate-dependent formation of 5-hydroxyuridine (ho5U) modification at position 34 in tRNAs, the first step in 5-carboxymethoxyuridine (cmo5U) biosynthesis. The chain is tRNA hydroxylation protein P from Helicobacter pylori (strain ATCC 700392 / 26695) (Campylobacter pylori).